The following is a 92-amino-acid chain: DNA-directed RNA polymerase subunit Rpo11 (92 aa).

It belongs to the archaeal Rpo11/eukaryotic RPB11/RPC19 RNA polymerase subunit family. As to quaternary structure, part of the RNA polymerase complex.

The protein localises to the cytoplasm. It carries out the reaction RNA(n) + a ribonucleoside 5'-triphosphate = RNA(n+1) + diphosphate. In terms of biological role, DNA-dependent RNA polymerase (RNAP) catalyzes the transcription of DNA into RNA using the four ribonucleoside triphosphates as substrates. This is DNA-directed RNA polymerase subunit Rpo11 from Saccharolobus islandicus (strain Y.N.15.51 / Yellowstone #2) (Sulfolobus islandicus).